The chain runs to 249 residues: Probable transcriptional regulatory protein HY04AAS1_0501 (249 aa).

It belongs to the TACO1 family.

Its subcellular location is the cytoplasm. In Hydrogenobaculum sp. (strain Y04AAS1), this protein is Probable transcriptional regulatory protein HY04AAS1_0501.